A 246-amino-acid polypeptide reads, in one-letter code: Flagellar L-ring protein (246 aa).

The signal sequence occupies residues 1-20 (MMQKCLSPKTLIAALVVLSA). Residue Cys-21 is the site of N-palmitoyl cysteine attachment. Cys-21 carries the S-diacylglycerol cysteine lipid modification.

This sequence belongs to the FlgH family. In terms of assembly, the basal body constitutes a major portion of the flagellar organelle and consists of four rings (L,P,S, and M) mounted on a central rod.

It localises to the cell outer membrane. The protein resides in the bacterial flagellum basal body. In terms of biological role, assembles around the rod to form the L-ring and probably protects the motor/basal body from shearing forces during rotation. The protein is Flagellar L-ring protein of Ruegeria pomeroyi (strain ATCC 700808 / DSM 15171 / DSS-3) (Silicibacter pomeroyi).